Here is a 443-residue protein sequence, read N- to C-terminus: UDP-N-acetylmuramate--L-alanine ligase (443 aa).

Position 111 to 117 (111 to 117 (GAHGKTS)) interacts with ATP.

This sequence belongs to the MurCDEF family.

It is found in the cytoplasm. It carries out the reaction UDP-N-acetyl-alpha-D-muramate + L-alanine + ATP = UDP-N-acetyl-alpha-D-muramoyl-L-alanine + ADP + phosphate + H(+). Its pathway is cell wall biogenesis; peptidoglycan biosynthesis. Functionally, cell wall formation. The polypeptide is UDP-N-acetylmuramate--L-alanine ligase (Levilactobacillus brevis (strain ATCC 367 / BCRC 12310 / CIP 105137 / JCM 1170 / LMG 11437 / NCIMB 947 / NCTC 947) (Lactobacillus brevis)).